A 323-amino-acid chain; its full sequence is 1D-myo-inositol 2-acetamido-2-deoxy-alpha-D-glucopyranoside deacetylase (323 aa).

The Zn(2+) site is built by His-28, Asp-31, and His-163.

Belongs to the MshB deacetylase family. Requires Zn(2+) as cofactor.

It catalyses the reaction 1D-myo-inositol 2-acetamido-2-deoxy-alpha-D-glucopyranoside + H2O = 1D-myo-inositol 2-amino-2-deoxy-alpha-D-glucopyranoside + acetate. Its function is as follows. Catalyzes the deacetylation of 1D-myo-inositol 2-acetamido-2-deoxy-alpha-D-glucopyranoside (GlcNAc-Ins) in the mycothiol biosynthesis pathway. This is 1D-myo-inositol 2-acetamido-2-deoxy-alpha-D-glucopyranoside deacetylase from Streptomyces scabiei (strain 87.22).